A 91-amino-acid polypeptide reads, in one-letter code: Small ribosomal subunit protein uS19 (91 aa).

The protein belongs to the universal ribosomal protein uS19 family.

Protein S19 forms a complex with S13 that binds strongly to the 16S ribosomal RNA. This is Small ribosomal subunit protein uS19 from Exiguobacterium sp. (strain ATCC BAA-1283 / AT1b).